Consider the following 253-residue polypeptide: Oxidoreductase AOL_s00215g277 (253 aa).

Residues 181 to 203 (FFGYWLTVILGYYIGSLLGYQPF) form a helical membrane-spanning segment.

It belongs to the oxidoreductase OpS7 family.

The protein resides in the membrane. The protein operates within secondary metabolite biosynthesis; terpenoid biosynthesis. Its function is as follows. Oxidoreductase; part of the gene cluster that mediates the biosynthesis of sesquiterpenyl epoxy-cyclohexenoids (SECs) such as anthrobotrisins and arthrosporols, metabolites that possess a novel hybrid carbon skeleton consisting of a polyketide-derived epoxycyclohexenol combined with a terpenoid-derived monocyclic sesquiterpenol substructure (PKS-PTS hybrid). The SEC pathway plays an important role for fungal soil colonization via decreasing fungal nematode-capturing ability. Within the pathway, the oxidoreductase AOL_s00215g277 seems to play a role in the farnesylation step of toluquinol to produce farnesyl hydroquinone, the hybrid precursor for biosynthesis of SECs. The pathway begins with the biosynthesis of 6-methylsalicylic acid (6-MSA), the first precursor of the polyketide-derived epoxycyclohexenol in arthrosporols, by the polyketide synthase (PKS) AOL_s00215g283 via condensation of 1 acetate and 3 malonate units. The 6-methylsalicylic acid decarboxylase AOL_s00215g281 then catalyzes the decarboxylation of 6-methylsalicylic acid to yield m-cresol. The cytochrome P450 monooxygenase AOL_s00215g282 further oxidizes m-cresol to yield toluquinol. With the assistance of the oxidoreductase AOL_s00215g277, the polyprenyl transferase AOL_s00215g276 catalyzes the farnesylation of toluquinol to produce farnesyl hydroquinone, the hybrid precursor for biosynthesis of SECs. Farnesyl hydroquinone undergoes epoxidation and then subsequent dehydrogenation to form farnesyl epoxy-quinone, the first and simplest SEC. The cytochrome P450 monooxygenase AOL_s00215g278 and the FAD-dependent monooxygenase AOL_s00215g279 might be involved in the oxygenation of the phenol moiety, most likely in the epoxy formation. The cytochrome P450 monooxygenases AOL_s00215g274 and AOL_s00215g280 are involved in specific regional ketone reductions at respectively C-4 and C-1 of farnesyl epoxy-quinone PubMed:33823587. The sequence is that of Oxidoreductase AOL_s00215g277 from Arthrobotrys oligospora (strain ATCC 24927 / CBS 115.81 / DSM 1491) (Nematode-trapping fungus).